A 490-amino-acid polypeptide reads, in one-letter code: Tryptophan decarboxylase (490 aa).

Lysine 306 is subject to N6-(pyridoxal phosphate)lysine.

The protein belongs to the group II decarboxylase family. As to quaternary structure, homodimer. Pyridoxal 5'-phosphate is required as a cofactor.

The protein resides in the cytoplasm. It carries out the reaction L-tryptophan + H(+) = tryptamine + CO2. With respect to regulation, inhibited by (S)-alpha-fluoromethyltryptophan. Catalyzes the decarboxylation of tryptophan to tryptamine. Tryptamine is a neurotransmitter that induces the release of serotonin, which is suggested to modulate gastrointestinal motility. Therefore, the tryptophan decarboxylase from the gut bacteria Ruminococcus gnavus (strain ATCC 29149 / VPI C7-9) may influence host brain and behavior. Has weak activity with tyrosine and phenylalanine. The protein is Tryptophan decarboxylase of Mediterraneibacter gnavus (strain ATCC 29149 / DSM 114966 / JCM 6515 / VPI C7-9) (Ruminococcus gnavus).